The following is a 290-amino-acid chain: Coiled-coil domain-containing protein 137 (290 aa).

4 disordered regions span residues 1–92 (MARP…EAQV), 98–117 (LEKEAKGEEPDIAVPKFKQR), 139–181 (LSKN…EARA), and 269–290 (RQEMTPAQPPGSSFQRQGHACL). Over residues 20-39 (SGQPQGRRQQQAQGQQRSAS) the composition is skewed to low complexity. Residues 56–79 (KNQDEQEIPFRLREIMRSRQEMKK) show a composition bias toward basic and acidic residues. A coiled-coil region spans residues 66-89 (RLREIMRSRQEMKKTLSNKKRKKE). The segment covering 154–163 (PKKEKSERKK) has biased composition (basic and acidic residues). The stretch at 155-192 (KKEKSERKKAFQKRRLEKAQRKREARAVDRLEQELLKD) forms a coiled coil. Residues 164–178 (AFQKRRLEKAQRKRE) show a composition bias toward basic residues.

It localises to the chromosome. The protein is Coiled-coil domain-containing protein 137 (Ccdc137) of Mus musculus (Mouse).